A 314-amino-acid polypeptide reads, in one-letter code: Methionyl-tRNA formyltransferase (314 aa).

113-116 (SLLP) is a binding site for (6S)-5,6,7,8-tetrahydrofolate.

This sequence belongs to the Fmt family.

The catalysed reaction is L-methionyl-tRNA(fMet) + (6R)-10-formyltetrahydrofolate = N-formyl-L-methionyl-tRNA(fMet) + (6S)-5,6,7,8-tetrahydrofolate + H(+). In terms of biological role, attaches a formyl group to the free amino group of methionyl-tRNA(fMet). The formyl group appears to play a dual role in the initiator identity of N-formylmethionyl-tRNA by promoting its recognition by IF2 and preventing the misappropriation of this tRNA by the elongation apparatus. The protein is Methionyl-tRNA formyltransferase of Pseudomonas aeruginosa (strain ATCC 15692 / DSM 22644 / CIP 104116 / JCM 14847 / LMG 12228 / 1C / PRS 101 / PAO1).